The following is a 276-amino-acid chain: Shikimate dehydrogenase (NADP(+)) (276 aa).

Shikimate is bound by residues 18–20 (SRS) and threonine 65. The active-site Proton acceptor is lysine 69. Shikimate-binding residues include asparagine 90 and aspartate 106. NADP(+) is bound by residues 132–136 (GAGGA) and isoleucine 221. Tyrosine 223 is a binding site for shikimate. Glycine 244 serves as a coordination point for NADP(+).

The protein belongs to the shikimate dehydrogenase family. Homodimer.

The catalysed reaction is shikimate + NADP(+) = 3-dehydroshikimate + NADPH + H(+). It functions in the pathway metabolic intermediate biosynthesis; chorismate biosynthesis; chorismate from D-erythrose 4-phosphate and phosphoenolpyruvate: step 4/7. Involved in the biosynthesis of the chorismate, which leads to the biosynthesis of aromatic amino acids. Catalyzes the reversible NADPH linked reduction of 3-dehydroshikimate (DHSA) to yield shikimate (SA). This Paramagnetospirillum magneticum (strain ATCC 700264 / AMB-1) (Magnetospirillum magneticum) protein is Shikimate dehydrogenase (NADP(+)).